Consider the following 445-residue polypeptide: Tubulin beta-2 chain (445 aa).

Glutamine 12, glutamate 73, serine 142, glycine 146, threonine 147, glycine 148, asparagine 208, and asparagine 230 together coordinate GTP. Glutamate 73 lines the Mg(2+) pocket.

Belongs to the tubulin family. Dimer of alpha and beta chains. A typical microtubule is a hollow water-filled tube with an outer diameter of 25 nm and an inner diameter of 15 nM. Alpha-beta heterodimers associate head-to-tail to form protofilaments running lengthwise along the microtubule wall with the beta-tubulin subunit facing the microtubule plus end conferring a structural polarity. Microtubules usually have 13 protofilaments but different protofilament numbers can be found in some organisms and specialized cells. The cofactor is Mg(2+).

The protein localises to the cytoplasm. Its subcellular location is the cytoskeleton. In terms of biological role, tubulin is the major constituent of microtubules, a cylinder consisting of laterally associated linear protofilaments composed of alpha- and beta-tubulin heterodimers. Microtubules grow by the addition of GTP-tubulin dimers to the microtubule end, where a stabilizing cap forms. Below the cap, tubulin dimers are in GDP-bound state, owing to GTPase activity of alpha-tubulin. The sequence is that of Tubulin beta-2 chain (TUBB2) from Suillus bovinus (Jersey cow bolete).